We begin with the raw amino-acid sequence, 389 residues long: Transaldolase (389 aa).

Lys136 functions as the Schiff-base intermediate with substrate in the catalytic mechanism. 2 consecutive EF-hand domains span residues 330–365 and 365–388; these read ALNQ…FDAI and IDLN…VSKL. The Ca(2+) site is built by Asp343, Asp345, Asp347, Glu354, Asp366, Asn368, Asp370, Lys372, and Glu377.

This sequence belongs to the transaldolase family. Type 1 subfamily.

The protein localises to the cytoplasm. It carries out the reaction D-sedoheptulose 7-phosphate + D-glyceraldehyde 3-phosphate = D-erythrose 4-phosphate + beta-D-fructose 6-phosphate. The protein operates within carbohydrate degradation; pentose phosphate pathway; D-glyceraldehyde 3-phosphate and beta-D-fructose 6-phosphate from D-ribose 5-phosphate and D-xylulose 5-phosphate (non-oxidative stage): step 2/3. Its function is as follows. Transaldolase is important for the balance of metabolites in the pentose-phosphate pathway. The chain is Transaldolase from Gloeobacter violaceus (strain ATCC 29082 / PCC 7421).